Consider the following 247-residue polypeptide: Protein GrpE (247 aa).

Disordered regions lie at residues 1-68 (MKKN…KNDD) and 226-247 (PAEK…KNEN). Basic and acidic residues-rich tracts occupy residues 7 to 35 (KHAD…KDEQ), 43 to 54 (TSKENPQEDKAE), and 228 to 247 (EKQD…KNEN).

It belongs to the GrpE family. In terms of assembly, homodimer.

The protein resides in the cytoplasm. Functionally, participates actively in the response to hyperosmotic and heat shock by preventing the aggregation of stress-denatured proteins, in association with DnaK and GrpE. It is the nucleotide exchange factor for DnaK and may function as a thermosensor. Unfolded proteins bind initially to DnaJ; upon interaction with the DnaJ-bound protein, DnaK hydrolyzes its bound ATP, resulting in the formation of a stable complex. GrpE releases ADP from DnaK; ATP binding to DnaK triggers the release of the substrate protein, thus completing the reaction cycle. Several rounds of ATP-dependent interactions between DnaJ, DnaK and GrpE are required for fully efficient folding. The chain is Protein GrpE from Treponema denticola (strain ATCC 35405 / DSM 14222 / CIP 103919 / JCM 8153 / KCTC 15104).